Reading from the N-terminus, the 369-residue chain is uncharacterized protein (369 aa).

This is an uncharacterized protein from Haloarcula marismortui (strain ATCC 43049 / DSM 3752 / JCM 8966 / VKM B-1809) (Halobacterium marismortui).